We begin with the raw amino-acid sequence, 266 residues long: Probable dihydroorotate dehydrogenase B (NAD(+)), electron transfer subunit (266 aa).

One can recognise an FAD-binding FR-type domain in the interval 5–99 (NVPEVLEIKR…RGPYGRGFEL (95 aa)). Cys-217, Cys-222, Cys-225, and Cys-235 together coordinate [2Fe-2S] cluster.

This sequence belongs to the PyrK family. Heterotetramer of 2 PyrK and 2 PyrD type B subunits. It depends on [2Fe-2S] cluster as a cofactor. Requires FAD as cofactor.

It participates in pyrimidine metabolism; UMP biosynthesis via de novo pathway; orotate from (S)-dihydroorotate (NAD(+) route): step 1/1. Responsible for channeling the electrons from the oxidation of dihydroorotate from the FMN redox center in the PyrD type B subunit to the ultimate electron acceptor NAD(+). The polypeptide is Probable dihydroorotate dehydrogenase B (NAD(+)), electron transfer subunit (Methanothermobacter thermautotrophicus (strain ATCC 29096 / DSM 1053 / JCM 10044 / NBRC 100330 / Delta H) (Methanobacterium thermoautotrophicum)).